Here is a 471-residue protein sequence, read N- to C-terminus: Ribulose bisphosphate carboxylase large chain (471 aa).

Positions 115 and 165 each coordinate substrate. The active-site Proton acceptor is K167. Position 169 (K169) interacts with substrate. 3 residues coordinate Mg(2+): K193, D195, and E196. N6-carboxylysine is present on K193. The active-site Proton acceptor is H286. Residues R287, H319, and S371 each contribute to the substrate site.

It belongs to the RuBisCO large chain family. Type I subfamily. As to quaternary structure, heterohexadecamer of 8 large chains and 8 small chains. Mg(2+) is required as a cofactor.

The catalysed reaction is 2 (2R)-3-phosphoglycerate + 2 H(+) = D-ribulose 1,5-bisphosphate + CO2 + H2O. It carries out the reaction D-ribulose 1,5-bisphosphate + O2 = 2-phosphoglycolate + (2R)-3-phosphoglycerate + 2 H(+). Its function is as follows. RuBisCO catalyzes two reactions: the carboxylation of D-ribulose 1,5-bisphosphate, the primary event in carbon dioxide fixation, as well as the oxidative fragmentation of the pentose substrate. Both reactions occur simultaneously and in competition at the same active site. The polypeptide is Ribulose bisphosphate carboxylase large chain (Alvinoconcha hessleri symbiotic bacterium).